A 314-amino-acid chain; its full sequence is Regulator of microtubule dynamics protein 1 (314 aa).

Position 165 is an N6-succinyllysine (lysine 165). 2 TPR repeats span residues alanine 168–aspartate 204 and proline 222–phenylalanine 258.

This sequence belongs to the RMDN family. Interacts with microtubules.

The protein localises to the cytoplasm. Its subcellular location is the cytoskeleton. It localises to the spindle. The protein resides in the spindle pole. The sequence is that of Regulator of microtubule dynamics protein 1 (RMDN1) from Homo sapiens (Human).